Consider the following 129-residue polypeptide: Succinate dehydrogenase assembly factor 3, mitochondrial (129 aa).

A mitochondrion-targeting transit peptide spans 1–21 (MQVNHLLRQAVKQTTRAGRLG).

It belongs to the complex I LYR family. SDHAF3 subfamily. Interacts with the iron-sulfur protein subunit within the SDH catalytic dimer.

The protein resides in the mitochondrion matrix. Functionally, plays an essential role in the assembly of succinate dehydrogenase (SDH), an enzyme complex (also referred to as respiratory complex II) that is a component of both the tricarboxylic acid (TCA) cycle and the mitochondrial electron transport chain, and which couples the oxidation of succinate to fumarate with the reduction of ubiquinone (coenzyme Q) to ubiquinol. Promotes maturation of the iron-sulfur protein subunit of the SDH catalytic dimer, protecting it from the deleterious effects of oxidants. May act together with SDHAF1. In Kluyveromyces lactis (strain ATCC 8585 / CBS 2359 / DSM 70799 / NBRC 1267 / NRRL Y-1140 / WM37) (Yeast), this protein is Succinate dehydrogenase assembly factor 3, mitochondrial.